Reading from the N-terminus, the 131-residue chain is Hypocretin neuropeptide precursor (131 aa).

The signal sequence occupies residues 1-33 (MNLPSTKVSWAAVTLLLLLLLLPPALLSSGAAA). Glutamine 34 bears the Pyrrolidone carboxylic acid mark. 2 disulfides stabilise this stretch: cysteine 39–cysteine 45 and cysteine 40–cysteine 47. At leucine 66 the chain carries Leucine amide. A Methionine amide modification is found at methionine 97. A propeptide spans 98 to 131 (GRRAGAEPAPRPCLGRRCSAPAAASVAPGGQSGI) (removed in mature form).

It belongs to the orexin family. In terms of processing, specific enzymatic cleavages at paired basic residues yield the different active peptides. In terms of tissue distribution, abundantly expressed in subthalamic nucleus but undetectable in other brain regions tested (hypothalamus was not tested) and in heart, placenta, lung, liver, skeletal muscle, kidney and pancreas.

Its subcellular location is the rough endoplasmic reticulum. It is found in the cytoplasmic vesicle. It localises to the synapse. Neuropeptides that play a significant role in the regulation of food intake and sleep-wakefulness, possibly by coordinating the complex behavioral and physiologic responses of these complementary homeostatic functions. A broader role in the homeostatic regulation of energy metabolism, autonomic function, hormonal balance and the regulation of body fluids, is also suggested. Its function is as follows. Binds to orexin receptors HCRTR1/OX1R and HCRTR2/OX2R with a high affinity. Stimulates food intake. Modulates pituitary luteinizing hormone secretion in an ovarian steroid-dependent manner. In terms of biological role, binds to orexin receptor HCRTR2/OX2R only. Stimulates food intake. Modulates pituitary luteinizing hormone secretion in an ovarian steroid-dependent manner. The chain is Hypocretin neuropeptide precursor from Homo sapiens (Human).